Consider the following 145-residue polypeptide: MSTTTEVVAHHWAFAVFLIVSIGLCCLMLAGAWFLGGKARGRHTNTPFESGIASVGTAKLRLSAKFYLVAMFFVIFDVEALYLYAWSTAIRESGWVGFVEAAIFILVLLAGLFYLVRIGALDWAPARRQFDVKPTTISHANRQKP.

The next 3 helical transmembrane spans lie at 14 to 34, 66 to 86, and 96 to 116; these read FAVFLIVSIGLCCLMLAGAWF, FYLVAMFFVIFDVEALYLYAW, and VGFVEAAIFILVLLAGLFYLV.

The protein belongs to the complex I subunit 3 family. NDH-1 is composed of 13 different subunits. Subunits NuoA, H, J, K, L, M, N constitute the membrane sector of the complex.

Its subcellular location is the cell inner membrane. The enzyme catalyses a quinone + NADH + 5 H(+)(in) = a quinol + NAD(+) + 4 H(+)(out). NDH-1 shuttles electrons from NADH, via FMN and iron-sulfur (Fe-S) centers, to quinones in the respiratory chain. The immediate electron acceptor for the enzyme in this species is believed to be ubiquinone. Couples the redox reaction to proton translocation (for every two electrons transferred, four hydrogen ions are translocated across the cytoplasmic membrane), and thus conserves the redox energy in a proton gradient. The sequence is that of NADH-quinone oxidoreductase subunit A from Erwinia tasmaniensis (strain DSM 17950 / CFBP 7177 / CIP 109463 / NCPPB 4357 / Et1/99).